The chain runs to 131 residues: Small ribosomal subunit protein uS11 (131 aa).

A compositionally biased stretch (basic residues) spans 1–15 (MAAQKVKKTRRRKER). A disordered region spans residues 1 to 23 (MAAQKVKKTRRRKERKNVEHGAA).

It belongs to the universal ribosomal protein uS11 family. Part of the 30S ribosomal subunit. Interacts with proteins S7 and S18. Binds to IF-3.

In terms of biological role, located on the platform of the 30S subunit, it bridges several disparate RNA helices of the 16S rRNA. Forms part of the Shine-Dalgarno cleft in the 70S ribosome. The sequence is that of Small ribosomal subunit protein uS11 from Clostridium perfringens (strain 13 / Type A).